Reading from the N-terminus, the 397-residue chain is MTTIDEVPGMADETALLDWLGTMREKQPVWQDRYGVWHVFRHADVQTVLRDTATFSSDPTRVIEGASPTPGMIHEIDPPEHRALRKVVSSAFTPRTISDLEPRIRDVTRSLLADAGESFDLVDVLAFPLPVTIVAELLGLPPMDHEQFGDWSGALVDIQMDDPTDPALAERIADVLNPLTAYLKARCAERRADPGDDLISRLVLAEVDGRALDDEEAANFSTALLLAGHITTTVLLGNIVRTLDEHPAHWDAAAEDPGRIPAIVEEVLRYRPPFPQMQRTTTKATEVAGVPIPADVMVNTWVLSANRDSDAHDDPDRFDPSRKSGGAAQLSFGHGVHFCLGAPLARLENRVALEEIIARFGRLTVDRDDERLRHFEQIVLGTRHLPVLAGSSPRQSA.

74 to 75 is a substrate binding site; it reads HE. Heme is bound by residues H81 and R85. Substrate is bound at residue Q278. Residue R279 coordinates heme. A compositionally biased stretch (basic and acidic residues) spans 307–322; sequence RDSDAHDDPDRFDPSR. The interval 307 to 326 is disordered; sequence RDSDAHDDPDRFDPSRKSGG. Heme is bound by residues H337 and C339.

It belongs to the cytochrome P450 family. In terms of assembly, monomer. Heme b is required as a cofactor.

The catalysed reaction is erythromycin D + NADPH + O2 + H(+) = erythromycin C + NADP(+) + H2O. Its pathway is antibiotic biosynthesis; erythromycin biosynthesis. Responsible for the C-12 hydroxylation of the macrolactone ring of erythromycin. Thus, EryK catalyzes the hydroxylation of erythromycin D (ErD) at the C-12 position to produce erythromycin C (ErC). Erythromycin B (ErB) is not a substrate for this enzyme. This chain is Erythromycin C-12 hydroxylase (eryK), found in Saccharopolyspora erythraea (strain ATCC 11635 / DSM 40517 / JCM 4748 / NBRC 13426 / NCIMB 8594 / NRRL 2338).